Consider the following 63-residue polypeptide: Large ribosomal subunit protein bL28 (63 aa).

Belongs to the bacterial ribosomal protein bL28 family.

The chain is Large ribosomal subunit protein bL28 from Desulforudis audaxviator (strain MP104C).